We begin with the raw amino-acid sequence, 178 residues long: Large ribosomal subunit protein uL6 (178 aa).

It belongs to the universal ribosomal protein uL6 family. As to quaternary structure, part of the 50S ribosomal subunit.

This protein binds to the 23S rRNA, and is important in its secondary structure. It is located near the subunit interface in the base of the L7/L12 stalk, and near the tRNA binding site of the peptidyltransferase center. In Corynebacterium jeikeium (strain K411), this protein is Large ribosomal subunit protein uL6.